The sequence spans 78 residues: ATP synthase subunit c (78 aa).

Helical transmembrane passes span 11–31 (FIGAGLAAIGSGAAAIGVGHV) and 53–73 (LFIGIAFAEALGIFAFLVALL).

Belongs to the ATPase C chain family. F-type ATPases have 2 components, F(1) - the catalytic core - and F(0) - the membrane proton channel. F(1) has five subunits: alpha(3), beta(3), gamma(1), delta(1), epsilon(1). F(0) has four main subunits: a(1), b(1), b'(1) and c(10-14). The alpha and beta chains form an alternating ring which encloses part of the gamma chain. F(1) is attached to F(0) by a central stalk formed by the gamma and epsilon chains, while a peripheral stalk is formed by the delta, b and b' chains.

It is found in the cell inner membrane. F(1)F(0) ATP synthase produces ATP from ADP in the presence of a proton or sodium gradient. F-type ATPases consist of two structural domains, F(1) containing the extramembraneous catalytic core and F(0) containing the membrane proton channel, linked together by a central stalk and a peripheral stalk. During catalysis, ATP synthesis in the catalytic domain of F(1) is coupled via a rotary mechanism of the central stalk subunits to proton translocation. Its function is as follows. Key component of the F(0) channel; it plays a direct role in translocation across the membrane. A homomeric c-ring of between 10-14 subunits forms the central stalk rotor element with the F(1) delta and epsilon subunits. In Jannaschia sp. (strain CCS1), this protein is ATP synthase subunit c.